Reading from the N-terminus, the 1421-residue chain is ALK tyrosine kinase receptor homolog scd-2 (1421 aa).

A signal peptide spans M1–A20. The Extracellular segment spans residues I21 to T903. 6 N-linked (GlcNAc...) asparagine glycosylation sites follow: N24, N44, N70, N83, N119, and N201. One can recognise an LDL-receptor class A domain in the interval Q300–C338. 3 cysteine pairs are disulfide-bonded: C301/C317, C309/C329, and C323/C338. The MAM domain maps to G339 to E542. 11 N-linked (GlcNAc...) asparagine glycosylation sites follow: N342, N362, N495, N533, N546, N633, N726, N793, N849, N873, and N893. Residues L904–V924 form a helical membrane-spanning segment. The Cytoplasmic segment spans residues Y925–R1421. Residues I976–V1261 form the Protein kinase domain. ATP is bound by residues L982–V990 and K1003. The active-site Proton acceptor is the D1106.

This sequence belongs to the protein kinase superfamily. Tyr protein kinase family. Insulin receptor subfamily. As to quaternary structure, interacts (via cytoplasmic domain) with fsn-1 (via SPRY domain). In terms of tissue distribution, expressed in AIA sensory neurons.

The protein localises to the cell membrane. The catalysed reaction is L-tyrosyl-[protein] + ATP = O-phospho-L-tyrosyl-[protein] + ADP + H(+). In terms of biological role, probable tyrosine-protein kinase receptor which regulates the dauer/non-dauer developmental decision probably by controlling daf-3 transcriptional activity in parallel or together with the TGF-beta pathway. Regulates integration of conflicting sensory cues in AIA interneurons. May act as a receptor for hen-1. In AWA neurons, together with hen-1, plays a role in regulating olfactory adaptation by controlling the forgetting sensory responses to odorants such as diacetyl. This chain is ALK tyrosine kinase receptor homolog scd-2, found in Caenorhabditis elegans.